A 262-amino-acid chain; its full sequence is Phosphatidylserine decarboxylase proenzyme (262 aa).

Active-site charge relay system; for autoendoproteolytic cleavage activity residues include aspartate 86, histidine 142, and serine 226. Serine 226 acts as the Schiff-base intermediate with substrate; via pyruvic acid; for decarboxylase activity in catalysis. Residue serine 226 is modified to Pyruvic acid (Ser); by autocatalysis.

Belongs to the phosphatidylserine decarboxylase family. PSD-B subfamily. Prokaryotic type I sub-subfamily. Heterodimer of a large membrane-associated beta subunit and a small pyruvoyl-containing alpha subunit. Pyruvate serves as cofactor. In terms of processing, is synthesized initially as an inactive proenzyme. Formation of the active enzyme involves a self-maturation process in which the active site pyruvoyl group is generated from an internal serine residue via an autocatalytic post-translational modification. Two non-identical subunits are generated from the proenzyme in this reaction, and the pyruvate is formed at the N-terminus of the alpha chain, which is derived from the carboxyl end of the proenzyme. The autoendoproteolytic cleavage occurs by a canonical serine protease mechanism, in which the side chain hydroxyl group of the serine supplies its oxygen atom to form the C-terminus of the beta chain, while the remainder of the serine residue undergoes an oxidative deamination to produce ammonia and the pyruvoyl prosthetic group on the alpha chain. During this reaction, the Ser that is part of the protease active site of the proenzyme becomes the pyruvoyl prosthetic group, which constitutes an essential element of the active site of the mature decarboxylase.

The protein localises to the cell membrane. The enzyme catalyses a 1,2-diacyl-sn-glycero-3-phospho-L-serine + H(+) = a 1,2-diacyl-sn-glycero-3-phosphoethanolamine + CO2. Its pathway is phospholipid metabolism; phosphatidylethanolamine biosynthesis; phosphatidylethanolamine from CDP-diacylglycerol: step 2/2. Functionally, catalyzes the formation of phosphatidylethanolamine (PtdEtn) from phosphatidylserine (PtdSer). The sequence is that of Phosphatidylserine decarboxylase proenzyme from Bacillus anthracis.